Here is a 139-residue protein sequence, read N- to C-terminus: 6,7-dimethyl-8-ribityllumazine synthase (139 aa).

5-amino-6-(D-ribitylamino)uracil contacts are provided by residues Phe-11, 42–44 (ALE), and 66–68 (VVI). A (2S)-2-hydroxy-3-oxobutyl phosphate-binding site is contributed by 71–72 (ET). His-74 functions as the Proton donor in the catalytic mechanism. Asn-98 serves as a coordination point for 5-amino-6-(D-ribitylamino)uracil. Arg-112 serves as a coordination point for (2S)-2-hydroxy-3-oxobutyl phosphate.

The protein belongs to the DMRL synthase family.

It catalyses the reaction (2S)-2-hydroxy-3-oxobutyl phosphate + 5-amino-6-(D-ribitylamino)uracil = 6,7-dimethyl-8-(1-D-ribityl)lumazine + phosphate + 2 H2O + H(+). Its pathway is cofactor biosynthesis; riboflavin biosynthesis; riboflavin from 2-hydroxy-3-oxobutyl phosphate and 5-amino-6-(D-ribitylamino)uracil: step 1/2. In terms of biological role, catalyzes the formation of 6,7-dimethyl-8-ribityllumazine by condensation of 5-amino-6-(D-ribitylamino)uracil with 3,4-dihydroxy-2-butanone 4-phosphate. This is the penultimate step in the biosynthesis of riboflavin. The polypeptide is 6,7-dimethyl-8-ribityllumazine synthase (Novosphingobium aromaticivorans (strain ATCC 700278 / DSM 12444 / CCUG 56034 / CIP 105152 / NBRC 16084 / F199)).